The sequence spans 424 residues: Glutamate-1-semialdehyde 2,1-aminomutase (424 aa).

The residue at position 263 (lysine 263) is an N6-(pyridoxal phosphate)lysine.

The protein belongs to the class-III pyridoxal-phosphate-dependent aminotransferase family. HemL subfamily. As to quaternary structure, homodimer. Pyridoxal 5'-phosphate is required as a cofactor.

Its subcellular location is the cytoplasm. The enzyme catalyses (S)-4-amino-5-oxopentanoate = 5-aminolevulinate. The protein operates within porphyrin-containing compound metabolism; protoporphyrin-IX biosynthesis; 5-aminolevulinate from L-glutamyl-tRNA(Glu): step 2/2. The sequence is that of Glutamate-1-semialdehyde 2,1-aminomutase from Campylobacter jejuni subsp. doylei (strain ATCC BAA-1458 / RM4099 / 269.97).